The chain runs to 208 residues: Large ribosomal subunit protein uL4 (208 aa).

The disordered stretch occupies residues 44–79 (QRQGTHKSKERSEISGSTRKIGRQKGGGGARRGDMN).

This sequence belongs to the universal ribosomal protein uL4 family. In terms of assembly, part of the 50S ribosomal subunit.

One of the primary rRNA binding proteins, this protein initially binds near the 5'-end of the 23S rRNA. It is important during the early stages of 50S assembly. It makes multiple contacts with different domains of the 23S rRNA in the assembled 50S subunit and ribosome. Functionally, forms part of the polypeptide exit tunnel. This Bacteroides fragilis (strain YCH46) protein is Large ribosomal subunit protein uL4.